The sequence spans 152 residues: Putative multi-protein-binding factor 1 (152 aa).

The interval 1–24 is disordered; the sequence is MSDDWESKTVIGSRARVGGGGPRA. One can recognise an HTH cro/C1-type domain in the interval 86-140; it reads IIKGRSEKGLTQKELAVKINEKPQVVNDYESGRAQPNQQVLSKMERVLGIKLRGK. The segment at residues 97–116 is a DNA-binding region (H-T-H motif); that stretch reads QKELAVKINEKPQVVNDYES.

It belongs to the MBF1 family.

Its function is as follows. Transcriptional coactivator that stimulates GCN4-dependent transcriptional activity by bridging the DNA-binding region of GCN4 and TBP (SPT15), thereby recruiting TBP to GCN4-bound promoters. Involved in induction of the ribosome quality control (RQC) pathway; a pathway that degrades nascent peptide chains during problematic translation. Required to prevent stalled ribosomes from frameshifting. This chain is Putative multi-protein-binding factor 1 (MBF1), found in Yarrowia lipolytica (strain CLIB 122 / E 150) (Yeast).